The following is a 637-amino-acid chain: Threonine--tRNA ligase (637 aa).

In terms of domain architecture, TGS spans 1–61 (MITITLPDSS…ATDAAVRLIT (61 aa)). A catalytic region spans residues 238-528 (DHRKLGAELD…LIEHFAGKFP (291 aa)). Residues Cys-329, His-380, and His-505 each contribute to the Zn(2+) site.

It belongs to the class-II aminoacyl-tRNA synthetase family. As to quaternary structure, homodimer. Zn(2+) is required as a cofactor.

Its subcellular location is the cytoplasm. The catalysed reaction is tRNA(Thr) + L-threonine + ATP = L-threonyl-tRNA(Thr) + AMP + diphosphate + H(+). Functionally, catalyzes the attachment of threonine to tRNA(Thr) in a two-step reaction: L-threonine is first activated by ATP to form Thr-AMP and then transferred to the acceptor end of tRNA(Thr). Also edits incorrectly charged L-seryl-tRNA(Thr). This is Threonine--tRNA ligase from Desulfosudis oleivorans (strain DSM 6200 / JCM 39069 / Hxd3) (Desulfococcus oleovorans).